The chain runs to 406 residues: Biofilm regulatory protein A (406 aa).

Positions 1–26 (MKIGKKILIMLVTIFLTSLVALGVYA) are cleaved as a signal peptide. Residues 347–397 (SSSASDYSSSGNYSGSSSDYGSSSSYGSNSSSGSSSDYSGQNSYNQGNYQQ) show a composition bias toward low complexity. A disordered region spans residues 347–406 (SSSASDYSSSGNYSGSSSDYGSSSSYGSNSSSGSSSDYSGQNSYNQGNYQQPAAGTGIGN).

The protein belongs to the LytR/CpsA/Psr (LCP) family.

The protein resides in the cell envelope. In terms of biological role, involved in biofilm formation, cell division, autolysis and the regulation of acid and oxidative stress tolerance. May be associated with systemic virulence in blood. This chain is Biofilm regulatory protein A (brpA), found in Streptococcus mutans serotype c (strain ATCC 700610 / UA159).